A 429-amino-acid chain; its full sequence is Adenylosuccinate synthetase (429 aa).

Residues Gly-12 to Lys-18 and Gly-40 to Thr-42 contribute to the GTP site. Residue Asp-13 is the Proton acceptor of the active site. Residues Asp-13 and Gly-40 each contribute to the Mg(2+) site. IMP is bound by residues Asp-13–Lys-16, Asn-38–His-41, Thr-128, Arg-142, Gln-223, Thr-238, and Arg-302. His-41 acts as the Proton donor in catalysis. Thr-298 to Arg-304 lines the substrate pocket. GTP is bound by residues Arg-304, Ser-330–Asp-332, and Ser-412–Gly-414.

The protein belongs to the adenylosuccinate synthetase family. In terms of assembly, homodimer. Mg(2+) is required as a cofactor.

It localises to the cytoplasm. It catalyses the reaction IMP + L-aspartate + GTP = N(6)-(1,2-dicarboxyethyl)-AMP + GDP + phosphate + 2 H(+). The protein operates within purine metabolism; AMP biosynthesis via de novo pathway; AMP from IMP: step 1/2. Functionally, plays an important role in the de novo pathway of purine nucleotide biosynthesis. Catalyzes the first committed step in the biosynthesis of AMP from IMP. The polypeptide is Adenylosuccinate synthetase (Bacillus cereus (strain ZK / E33L)).